We begin with the raw amino-acid sequence, 185 residues long: Probable chorismate pyruvate-lyase (185 aa).

3 residues coordinate substrate: R84, L122, and E178.

It belongs to the UbiC family.

It is found in the cytoplasm. The catalysed reaction is chorismate = 4-hydroxybenzoate + pyruvate. The protein operates within cofactor biosynthesis; ubiquinone biosynthesis. In terms of biological role, removes the pyruvyl group from chorismate, with concomitant aromatization of the ring, to provide 4-hydroxybenzoate (4HB) for the ubiquinone pathway. The polypeptide is Probable chorismate pyruvate-lyase (Hydrogenovibrio crunogenus (strain DSM 25203 / XCL-2) (Thiomicrospira crunogena)).